Here is a 123-residue protein sequence, read N- to C-terminus: Small ribosomal subunit protein uS12 (123 aa).

The tract at residues 1-21 (MPTIEQLVRKGRQAKPKKSKT) is disordered. Residues 9-20 (RKGRQAKPKKSK) are compositionally biased toward basic residues.

The protein belongs to the universal ribosomal protein uS12 family. As to quaternary structure, part of the 30S ribosomal subunit. Contacts proteins S8 and S17. May interact with IF1 in the 30S initiation complex.

Functionally, with S4 and S5 plays an important role in translational accuracy. Its function is as follows. Interacts with and stabilizes bases of the 16S rRNA that are involved in tRNA selection in the A site and with the mRNA backbone. Located at the interface of the 30S and 50S subunits, it traverses the body of the 30S subunit contacting proteins on the other side and probably holding the rRNA structure together. The combined cluster of proteins S8, S12 and S17 appears to hold together the shoulder and platform of the 30S subunit. In Bifidobacterium longum (strain NCC 2705), this protein is Small ribosomal subunit protein uS12.